We begin with the raw amino-acid sequence, 2322 residues long: Genome polyprotein (2322 aa).

One can recognise a Peptidase C28 domain in the interval 29–182; it reads MEFTLYNGEK…NPADVLVFVP (154 aa). Residues Cys51, His148, and Asp163 each act as for leader protease activity in the active site. 2 disordered regions span residues 199–219 and 238–262; these read RLRGAGQSSPTTGSQNQSGNT and QLGDNAISGGSNEGSTDTTSTHTNN. Gly202 carries N-myristoyl glycine; by host lipidation. 2 stretches are compositionally biased toward polar residues: residues 204–219 and 238–251; these read GQSSPTTGSQNQSGNT and QLGDNAISGGSNEG. Low complexity predominate over residues 252-262; that stretch reads STDTTSTHTNN. Residues 869 to 871 carry the Cell attachment site motif; it reads RGD. In terms of domain architecture, SF3 helicase spans 1189-1353; that stretch reads NVHIANLCKV…DGYKINNKLD (165 aa). Residue 1217 to 1224 participates in ATP binding; that stretch reads GKSGQGKS. The stretch at 1484–1504 is an intramembrane region; sequence FEVVALCLTLLANIVIMLRQA. A disordered region spans residues 1512–1574; sequence DDPLDGDVTL…PRAEGPYAGP (63 aa). The span at 1539 to 1553 shows a compositional bias: basic and acidic residues; it reads FRERSPTEQGTREDA. An O-(5'-phospho-RNA)-tyrosine mark is found at Tyr1571, Tyr1594, and Tyr1618. Positions 1642–1838 constitute a Peptidase C3 domain; it reads APPTDLQKMV…YCSCVSRSML (197 aa). His1685 (for protease 3C activity; Proton donor/acceptor) is an active-site residue. Catalysis depends on for protease 3C activity residues Asp1723 and Cys1802. Residues 1868–1876 carry the Nuclear localization signal motif; sequence MRKTKLAPT. The region spanning 2086–2204 is the RdRp catalytic domain; the sequence is KNVWDVDYSA…ASDYDLDFEA (119 aa).

Belongs to the picornaviruses polyprotein family. As to quaternary structure, interacts with host ISG15. In terms of assembly, interacts (via R-G-D motif) with host ITGAV/ITGB6. Interacts with host MAVS; this interaction inhibits binding of host TRAF3 to MAVS, thereby suppressing interferon-mediated responses. Forms homooligomers. As to quaternary structure, homohexamer. Interacts with host VIM. Interacts with host BECN1. In terms of assembly, interacts with host DCTN3. Interacts with RNA-dependent RNA polymerase; this interaction allows 3B-1 to binds 2 polymerases and act as a primer. It also allows the recruitment of the RNA-dependent RNA polymerase to host membranes. As to quaternary structure, interacts with RNA-dependent RNA polymerase; this interaction allows 3B-2 to act as a primer. In terms of assembly, interacts with RNA-dependent RNA polymerase; this interaction allows 3B-3 to act as a primer. Interacts with 3B-1; this interaction allows 3B-1 to binds 2 polymerases and act as a primer. It also allows the recruitment of the RNA-dependent RNA polymerase to host membranes. Interacts with 3B-2; this interaction allows 3B-2 to act as a primer. Interacts with 3B-3; this interaction allows 3B-3 to act as a primer. Removes six residues from its own C-terminus, generating sLb(pro). Post-translationally, specific enzymatic cleavages in vivo by the viral proteases yield a variety of precursors and mature proteins. The polyprotein seems to be cotranslationally cleaved at the 2A/2B junction by a ribosomal skip from one codon to the next without formation of a peptide bond. This process would release the L-P1-2A peptide from the translational complex. In terms of processing, during virion maturation, immature virions are rendered infectious following cleavage of VP0 into VP4 and VP2. This maturation seems to be an autocatalytic event triggered by the presence of RNA in the capsid and is followed by a conformational change of the particle. Myristoylation is required during RNA encapsidation and formation of the mature virus particle. Post-translationally, uridylylated by the polymerase and covalently linked to the 5'-end of genomic RNA. These uridylylated forms act as a nucleotide-peptide primer for the polymerase.

Its subcellular location is the host nucleus. It is found in the host cytoplasm. The protein resides in the virion. The protein localises to the host endoplasmic reticulum membrane. It localises to the host cytoplasmic vesicle membrane. The catalysed reaction is Autocatalytically cleaves itself from the polyprotein of the foot-and-mouth disease virus by hydrolysis of a Lys-|-Gly bond, but then cleaves host cell initiation factor eIF-4G at bonds -Gly-|-Arg- and -Lys-|-Arg-.. The enzyme catalyses a ribonucleoside 5'-triphosphate + H2O = a ribonucleoside 5'-diphosphate + phosphate + H(+). It catalyses the reaction RNA(n) + a ribonucleoside 5'-triphosphate = RNA(n+1) + diphosphate. It carries out the reaction Selective cleavage of Gln-|-Gly bond in the poliovirus polyprotein. In other picornavirus reactions Glu may be substituted for Gln, and Ser or Thr for Gly.. Autocatalytically cleaves itself from the polyprotein at the L/VP0 junction. Also cleaves the host translation initiation factors EIF4G1 and EIF4G3, in order to shut off the capped cellular mRNA transcription. Plays a role in counteracting host innate antiviral response using diverse mechanisms. Possesses a deubiquitinase activity acting on both 'Lys-48' and 'Lys-63'-linked polyubiquitin chains. In turn, inhibits the ubiquitination and subsequent activation of key signaling molecules of type I IFN response such as host RIGI, TBK1, TRAF3 and TRAF6. Inhibits host NF-kappa-B activity by inducing a decrease in RELA mRNA levels. Cleaves a peptide bond in the C-terminus of host ISG15, resulting in the damaging of this modifier that can no longer be attached to target proteins. Also cleaves host G3BP1 and G3BP2 in order to inhibit cytoplasmic stress granules assembly. Functionally, lies on the inner surface of the capsid shell. After binding to the host receptor, the capsid undergoes conformational changes. Capsid protein VP4 is released, capsid protein VP1 N-terminus is externalized, and together, they shape a pore in the host membrane through which the viral genome is translocated into the host cell cytoplasm. After genome has been released, the channel shrinks. In terms of biological role, forms an icosahedral capsid of pseudo T=3 symmetry with capsid proteins VP1 and VP3. The capsid is composed of 60 copies of each capsid protein organized in the form of twelve pentamers and encloses the viral positive strand RNA genome. Upon acidifcation in the endosome, dissociates into pentamers. Its function is as follows. Forms an icosahedral capsid of pseudo T=3 symmetry with capsid proteins VP0 and VP3. The capsid is composed of 60 copies of each capsid protein organized in the form of twelve pentamers and encloses the viral positive strand RNA genome. Upon acidifcation in the endosome, dissociates into pentamers. Forms an icosahedral capsid of pseudo T=3 symmetry with capsid proteins VP2 and VP3. The capsid is composed of 60 copies of each capsid protein organized in the form of twelve pentamers and encloses the viral positive strand RNA genome. Mediates cell entry by attachment to an integrin receptor, usually host ITGAV/ITGB6. In addition, targets host MAVS to suppress type I IFN pathway. Upon acidifcation in the endosome, dissociates into pentamers. Functionally, mediates self-processing of the polyprotein by a translational effect termed 'ribosome skipping'. Mechanistically, 2A-mediated cleavage occurs between the C-terminal glycine and the proline of the downstream protein 2B. In the case of foot-and-mouth disease virus, the 2A oligopeptide is post-translationally 'trimmed' from the C-terminus of the upstream protein 1D by 3C proteinase. In terms of biological role, plays an essential role in the virus replication cycle by acting as a viroporin. Creates a pore in the host endoplasmic reticulum and as a consequence releases Ca2+ in the cytoplasm of infected cell. In turn, high levels of cytoplasmic calcium may trigger membrane trafficking and transport of viral ER-associated proteins to viroplasms, sites of viral genome replication. Its function is as follows. Associates with and induces structural rearrangements of intracellular membranes. Triggers host autophagy by interacting with host BECN1 and thereby promotes viral replication. Participates in viral replication and interacts with host DHX9. Displays RNA-binding, nucleotide binding and NTPase activities. May play a role in virion morphogenesis and viral RNA encapsidation by interacting with the capsid protein VP3. Plays important roles in virus replication, virulence and host range. Cooperates with host DDX56 to inhibit IRF3 nuclear translocation and subsequent type I interferon production. Functionally, covalently linked to the 5'-end of both the positive-strand and negative-strand genomic RNAs. Acts as a genome-linked replication primer. In terms of biological role, cysteine protease that generates mature viral proteins from the precursor polyprotein. In addition to its proteolytic activity, binds to viral RNA and thus influences viral genome replication. RNA and substrate bind cooperatively to the protease. Its function is as follows. RNA-directed RNA polymerase 3D-POL replicates genomic and antigenomic RNA by recognizing replications specific signals. Covalently attaches UMP to a tyrosine of VPg, which is used to prime RNA synthesis. The positive stranded RNA genome is first replicated at virus induced membranous vesicles, creating a dsRNA genomic replication form. This dsRNA is then used as template to synthesize positive stranded RNA genomes. ss(+)RNA genomes are either translated, replicated or encapsidated. This Foot-and-mouth disease virus (isolate Swine/Taiwan/OTai/1997 serotype O) (FMDV) protein is Genome polyprotein.